The following is a 90-amino-acid chain: Inactive casein kinase II subunit alpha-2 (90 aa).

Residues 40-48 (VGRGKYSEV) and Lys-63 contribute to the ATP site.

Belongs to the protein kinase superfamily. Ser/Thr protein kinase family. CK2 subfamily.

The Nipponbare allele of HD6 contains a premature stop codon, resulting in a truncated non-functional product. This is Inactive casein kinase II subunit alpha-2 from Oryza sativa subsp. japonica (Rice).